The following is a 734-amino-acid chain: Photosystem I P700 chlorophyll a apoprotein A2 (734 aa).

Helical transmembrane passes span I46–A69, L135–Q158, L175–I199, I273–Y291, L330–Y353, A369–I395, A417–H439, and F517–V535. 2 residues coordinate [4Fe-4S] cluster: C559 and C568. A run of 2 helical transmembrane segments spans residues A575–W596 and L643–I665. Chlorophyll a is bound by residues H654, M662, and Y670. A phylloquinone-binding site is contributed by W671. A helical membrane pass occupies residues L707–A727.

The protein belongs to the PsaA/PsaB family. As to quaternary structure, the PsaA/B heterodimer binds the P700 chlorophyll special pair and subsequent electron acceptors. PSI consists of a core antenna complex that captures photons, and an electron transfer chain that converts photonic excitation into a charge separation. The eukaryotic PSI reaction center is composed of at least 11 subunits. P700 is a chlorophyll a/chlorophyll a' dimer, A0 is one or more chlorophyll a, A1 is one or both phylloquinones and FX is a shared 4Fe-4S iron-sulfur center. serves as cofactor.

Its subcellular location is the plastid. It is found in the chloroplast thylakoid membrane. The enzyme catalyses reduced [plastocyanin] + hnu + oxidized [2Fe-2S]-[ferredoxin] = oxidized [plastocyanin] + reduced [2Fe-2S]-[ferredoxin]. PsaA and PsaB bind P700, the primary electron donor of photosystem I (PSI), as well as the electron acceptors A0, A1 and FX. PSI is a plastocyanin-ferredoxin oxidoreductase, converting photonic excitation into a charge separation, which transfers an electron from the donor P700 chlorophyll pair to the spectroscopically characterized acceptors A0, A1, FX, FA and FB in turn. Oxidized P700 is reduced on the lumenal side of the thylakoid membrane by plastocyanin. The protein is Photosystem I P700 chlorophyll a apoprotein A2 of Chaetosphaeridium globosum (Charophycean green alga).